The chain runs to 313 residues: Homoserine O-succinyltransferase (313 aa).

Catalysis depends on Cys-142, which acts as the Acyl-thioester intermediate. Substrate is bound by residues Lys-163 and Ser-192. Residue His-235 is the Proton acceptor of the active site. The active site involves Glu-237. Arg-249 lines the substrate pocket.

It belongs to the MetA family.

It localises to the cytoplasm. It carries out the reaction L-homoserine + succinyl-CoA = O-succinyl-L-homoserine + CoA. The protein operates within amino-acid biosynthesis; L-methionine biosynthesis via de novo pathway; O-succinyl-L-homoserine from L-homoserine: step 1/1. Its function is as follows. Transfers a succinyl group from succinyl-CoA to L-homoserine, forming succinyl-L-homoserine. This Vibrio vulnificus (strain CMCP6) protein is Homoserine O-succinyltransferase.